The chain runs to 110 residues: Coiled-coil-helix-coiled-coil-helix domain-containing protein 5 (110 aa).

Methionine 1 carries the N-acetylmethionine modification. CHCH domains lie at 9-52 and 55-97; these read ARYC…PIIR and RQAC…QPPR. 4 short sequence motifs (cx9C motif) span residues 12-22, 34-44, 58-68, and 79-89; these read CGRELEQYGQC, CHYLKMSIAQC, CAQPFEAFEEC, and CAEHMRRFLQC. Cystine bridges form between cysteine 12–cysteine 44, cysteine 22–cysteine 34, cysteine 58–cysteine 89, and cysteine 68–cysteine 79.

In terms of assembly, monomer.

Its subcellular location is the mitochondrion intermembrane space. This Homo sapiens (Human) protein is Coiled-coil-helix-coiled-coil-helix domain-containing protein 5 (CHCHD5).